Consider the following 157-residue polypeptide: S-ribosylhomocysteine lyase (157 aa).

Residues H54, H58, and C126 each coordinate Fe cation.

This sequence belongs to the LuxS family. In terms of assembly, homodimer. Requires Fe cation as cofactor.

The catalysed reaction is S-(5-deoxy-D-ribos-5-yl)-L-homocysteine = (S)-4,5-dihydroxypentane-2,3-dione + L-homocysteine. Involved in the synthesis of autoinducer 2 (AI-2) which is secreted by bacteria and is used to communicate both the cell density and the metabolic potential of the environment. The regulation of gene expression in response to changes in cell density is called quorum sensing. Catalyzes the transformation of S-ribosylhomocysteine (RHC) to homocysteine (HC) and 4,5-dihydroxy-2,3-pentadione (DPD). The sequence is that of S-ribosylhomocysteine lyase from Bacillus anthracis (strain A0248).